A 153-amino-acid chain; its full sequence is uncharacterized protein (153 aa).

The N-terminal stretch at 1–19 (MRKYIPLVLFIFSWPVLCA) is a signal peptide. Residues R46, E54, and R88 contribute to the active site.

This sequence belongs to the thermonuclease family.

This is an uncharacterized protein from Escherichia coli.